Consider the following 250-residue polypeptide: 5-oxoprolinase subunit A (250 aa).

The protein belongs to the LamB/PxpA family. As to quaternary structure, forms a complex composed of PxpA, PxpB and PxpC.

The enzyme catalyses 5-oxo-L-proline + ATP + 2 H2O = L-glutamate + ADP + phosphate + H(+). In terms of biological role, catalyzes the cleavage of 5-oxoproline to form L-glutamate coupled to the hydrolysis of ATP to ADP and inorganic phosphate. The polypeptide is 5-oxoprolinase subunit A (Paraburkholderia phytofirmans (strain DSM 17436 / LMG 22146 / PsJN) (Burkholderia phytofirmans)).